Consider the following 510-residue polypeptide: Propionyl-CoA carboxylase beta chain (510 aa).

Residues 1–257 (MKDILQELEN…SNRTPAPVRP (257 aa)) form the CoA carboxyltransferase N-terminal domain. Positions 1–504 (MKDILQELEN…NKKLANPWKK (504 aa)) are carboxyltransferase. A CoA carboxyltransferase C-terminal domain is found at 264-504 (RIEDSLDTLI…NKKLANPWKK (241 aa)).

The protein belongs to the AccD/PCCB family. In terms of assembly, probably a dodecamer composed of six biotin-containing alpha subunits and six beta subunits.

The enzyme catalyses propanoyl-CoA + hydrogencarbonate + ATP = (S)-methylmalonyl-CoA + ADP + phosphate + H(+). The protein operates within metabolic intermediate metabolism; propanoyl-CoA degradation; succinyl-CoA from propanoyl-CoA: step 1/3. This chain is Propionyl-CoA carboxylase beta chain, found in Cereibacter sphaeroides (strain ATCC 17023 / DSM 158 / JCM 6121 / CCUG 31486 / LMG 2827 / NBRC 12203 / NCIMB 8253 / ATH 2.4.1.) (Rhodobacter sphaeroides).